A 56-amino-acid polypeptide reads, in one-letter code: Large ribosomal subunit protein bL32 (56 aa).

Residues 1–28 (MAVQQNRKTRSKRGMRRSHDALTTAALS) form a disordered region. Over residues 7-16 (RKTRSKRGMR) the composition is skewed to basic residues.

The protein belongs to the bacterial ribosomal protein bL32 family.

In Vibrio vulnificus (strain CMCP6), this protein is Large ribosomal subunit protein bL32.